Reading from the N-terminus, the 162-residue chain is Regulator of sigma D (162 aa).

Belongs to the Rsd/AlgQ family. As to quaternary structure, interacts with RpoD.

The protein resides in the cytoplasm. Binds RpoD and negatively regulates RpoD-mediated transcription activation by preventing the interaction between the primary sigma factor RpoD with the catalytic core of the RNA polymerase and with promoter DNA. May be involved in replacement of the RNA polymerase sigma subunit from RpoD to RpoS during the transition from exponential growth to the stationary phase. The chain is Regulator of sigma D from Salmonella typhi.